The following is a 130-amino-acid chain: Glycine cleavage system H protein (130 aa).

In terms of domain architecture, Lipoyl-binding spans 24–106 (TFTVGITDHA…YGDGWLYRIT (83 aa)). Position 65 is an N6-lipoyllysine (Lys-65).

It belongs to the GcvH family. In terms of assembly, the glycine cleavage system is composed of four proteins: P, T, L and H. The cofactor is (R)-lipoate.

Its function is as follows. The glycine cleavage system catalyzes the degradation of glycine. The H protein shuttles the methylamine group of glycine from the P protein to the T protein. This Coxiella burnetii (strain CbuK_Q154) (Coxiella burnetii (strain Q154)) protein is Glycine cleavage system H protein.